We begin with the raw amino-acid sequence, 177 residues long: MAELATIARPYAEALFRVAKAADLNSWANLVSEMAQVAANPDVYALAHNPKVSDDLISSTFISALKSPVGAEAKNFINMLVQNDRLTLLPEIATQFHALKNAQEGAADAEIVSAFELSSAQLTELVATLEKKFGRKLNPTVTVDGALIGGVRVVVGDEVLDTSVRAKLQQMQVALTA.

It belongs to the ATPase delta chain family. As to quaternary structure, F-type ATPases have 2 components, F(1) - the catalytic core - and F(0) - the membrane proton channel. F(1) has five subunits: alpha(3), beta(3), gamma(1), delta(1), epsilon(1). F(0) has three main subunits: a(1), b(2) and c(10-14). The alpha and beta chains form an alternating ring which encloses part of the gamma chain. F(1) is attached to F(0) by a central stalk formed by the gamma and epsilon chains, while a peripheral stalk is formed by the delta and b chains.

The protein resides in the cell inner membrane. Functionally, f(1)F(0) ATP synthase produces ATP from ADP in the presence of a proton or sodium gradient. F-type ATPases consist of two structural domains, F(1) containing the extramembraneous catalytic core and F(0) containing the membrane proton channel, linked together by a central stalk and a peripheral stalk. During catalysis, ATP synthesis in the catalytic domain of F(1) is coupled via a rotary mechanism of the central stalk subunits to proton translocation. This protein is part of the stalk that links CF(0) to CF(1). It either transmits conformational changes from CF(0) to CF(1) or is implicated in proton conduction. The sequence is that of ATP synthase subunit delta from Janthinobacterium sp. (strain Marseille) (Minibacterium massiliensis).